We begin with the raw amino-acid sequence, 360 residues long: Phosphoserine aminotransferase (360 aa).

L-glutamate is bound at residue Arg-41. Positions 101, 152, 172, and 195 each coordinate pyridoxal 5'-phosphate. Residue Lys-196 is modified to N6-(pyridoxal phosphate)lysine. 237–238 (NT) serves as a coordination point for pyridoxal 5'-phosphate.

It belongs to the class-V pyridoxal-phosphate-dependent aminotransferase family. SerC subfamily. Homodimer. Pyridoxal 5'-phosphate serves as cofactor.

It is found in the cytoplasm. The enzyme catalyses O-phospho-L-serine + 2-oxoglutarate = 3-phosphooxypyruvate + L-glutamate. The catalysed reaction is 4-(phosphooxy)-L-threonine + 2-oxoglutarate = (R)-3-hydroxy-2-oxo-4-phosphooxybutanoate + L-glutamate. It functions in the pathway amino-acid biosynthesis; L-serine biosynthesis; L-serine from 3-phospho-D-glycerate: step 2/3. The protein operates within cofactor biosynthesis; pyridoxine 5'-phosphate biosynthesis; pyridoxine 5'-phosphate from D-erythrose 4-phosphate: step 3/5. Catalyzes the reversible conversion of 3-phosphohydroxypyruvate to phosphoserine and of 3-hydroxy-2-oxo-4-phosphonooxybutanoate to phosphohydroxythreonine. The sequence is that of Phosphoserine aminotransferase from Paraburkholderia phymatum (strain DSM 17167 / CIP 108236 / LMG 21445 / STM815) (Burkholderia phymatum).